The chain runs to 780 residues: Pendrin (780 aa).

At 1–87 (MAARDRRSEP…YRVKEWLLSD (87 aa)) the chain is on the cytoplasmic side. A helical membrane pass occupies residues 88 to 108 (IISGVSTGLVGTLQGMAYALL). A topological domain (extracellular) is located at residue Ala109. The helical transmembrane segment at 110-130 (AVPVQYGLYSAFFPILTYFVF) threads the bilayer. The Cytoplasmic portion of the chain corresponds to 131-135 (GTSRH). A helical membrane pass occupies residues 136–156 (ISVGPFPVVSLMVGSVVLSMA). Residues 157 to 191 (PDDHFLVPSGNGSTLNTTTLDTGTRDAARVLLAST) are Extracellular-facing. The chain crosses the membrane as a helical span at residues 192 to 212 (LTLLVGIIQLVFGGLQIGFIV). The Cytoplasmic segment spans residues 213–218 (RYLADP). The helical transmembrane segment at 219-239 (LVGGFTTAAAFQVLVSQLKIV) threads the bilayer. Residues 240–263 (LNVSTKNYNGVLSIIYTLIEIFQN) lie on the Extracellular side of the membrane. The chain crosses the membrane as a helical span at residues 264–284 (IGDTNIADFIAGLLTIIVCMA). Residues 285–295 (VKELNDRFKHK) lie on the Cytoplasmic side of the membrane. A helical transmembrane segment spans residues 296 to 316 (IPVPIPIEVIVTIIATAISYG). Residues 317 to 344 (ANLEANYNAGIVKSIPSGFLPPVLPSVG) are Extracellular-facing. Residues 345–365 (LFSDMLAASFSIAVVAYAIAV) form a helical membrane-spanning segment. Residues 366 to 384 (SVGKVYATKHDYIIDGNQE) lie on the Cytoplasmic side of the membrane. The chain crosses the membrane as a helical span at residues 385–405 (FIAFGISNVFSGFFSCFVATT). Residues 406-421 (ALSRTAVQESTGGKTQ) are Extracellular-facing. Residues 422–442 (VAGLISAVIVMVAIVALGKLL) traverse the membrane as a helical segment. At 443–448 (EPLQKS) the chain is on the cytoplasmic side. A helical transmembrane segment spans residues 449 to 469 (VLAAVVIANLKGMFMQVCDVP). At 470-486 (RLWKQNKTDAVIWVFTC) the chain is on the extracellular side. The helical transmembrane segment at 487–507 (IMSIILGLDLGLLAGLLFGLL) threads the bilayer. The Cytoplasmic segment spans residues 508-780 (TVVLRVQFPS…QDEAMRRLAS (273 aa)). One can recognise an STAS domain in the interval 535 to 729 (HYKNLEEPEG…LTVHDAILYL (195 aa)).

Belongs to the SLC26A/SulP transporter (TC 2.A.53) family. In terms of tissue distribution, highly expressed in the kidney (at protein level).

The protein resides in the cell membrane. It localises to the apical cell membrane. The catalysed reaction is chloride(in) = chloride(out). It carries out the reaction iodide(out) = iodide(in). It catalyses the reaction hydrogencarbonate(in) + chloride(out) = hydrogencarbonate(out) + chloride(in). The enzyme catalyses iodide(in) + hydrogencarbonate(out) = iodide(out) + hydrogencarbonate(in). The catalysed reaction is iodide(in) + chloride(out) = iodide(out) + chloride(in). It carries out the reaction formate(in) + chloride(out) = formate(out) + chloride(in). Sodium-independent transporter of chloride and iodide. Mediates electroneutral chloride-bicarbonate and chloride-formate exchange with 1:1 stoichiometry. Mediates electroneutral iodide-chloride and iodide-bicarbonate exchange. This is Pendrin (Slc26a4) from Rattus norvegicus (Rat).